Consider the following 127-residue polypeptide: UPF0325 protein VP2321 (127 aa).

It belongs to the UPF0325 family.

The protein is UPF0325 protein VP2321 of Vibrio parahaemolyticus serotype O3:K6 (strain RIMD 2210633).